We begin with the raw amino-acid sequence, 274 residues long: Penicillin-insensitive murein endopeptidase (274 aa).

The first 19 residues, 1 to 19, serve as a signal peptide directing secretion; sequence MNKTAIALLALLASSASLA. 3 disulfides stabilise this stretch: cysteine 44–cysteine 265, cysteine 187–cysteine 235, and cysteine 216–cysteine 223. 6 residues coordinate Zn(2+): histidine 110, histidine 113, aspartate 120, aspartate 147, histidine 150, and histidine 211. Residues 228–265 form a disordered region; that stretch reads LPPPGDGCGAELQSWFAPPKPGTTKPEKKTPPPLPPSC.

The protein belongs to the peptidase M74 family. In terms of assembly, dimer. Zn(2+) is required as a cofactor.

The protein resides in the periplasm. Its function is as follows. Murein endopeptidase that cleaves the D-alanyl-meso-2,6-diamino-pimelyl amide bond that connects peptidoglycan strands. Likely plays a role in the removal of murein from the sacculus. The protein is Penicillin-insensitive murein endopeptidase of Shigella boydii serotype 18 (strain CDC 3083-94 / BS512).